Here is a 201-residue protein sequence, read N- to C-terminus: ATP-dependent Clp protease proteolytic subunit 2 (201 aa).

Ser-98 acts as the Nucleophile in catalysis. Residue His-123 is part of the active site.

The protein belongs to the peptidase S14 family. In terms of assembly, fourteen ClpP subunits assemble into 2 heptameric rings which stack back to back to give a disk-like structure with a central cavity, resembling the structure of eukaryotic proteasomes.

It is found in the cytoplasm. The catalysed reaction is Hydrolysis of proteins to small peptides in the presence of ATP and magnesium. alpha-casein is the usual test substrate. In the absence of ATP, only oligopeptides shorter than five residues are hydrolyzed (such as succinyl-Leu-Tyr-|-NHMec, and Leu-Tyr-Leu-|-Tyr-Trp, in which cleavage of the -Tyr-|-Leu- and -Tyr-|-Trp bonds also occurs).. Functionally, cleaves peptides in various proteins in a process that requires ATP hydrolysis. Has a chymotrypsin-like activity. Plays a major role in the degradation of misfolded proteins. The polypeptide is ATP-dependent Clp protease proteolytic subunit 2 (Rhizobium johnstonii (strain DSM 114642 / LMG 32736 / 3841) (Rhizobium leguminosarum bv. viciae)).